Reading from the N-terminus, the 428-residue chain is Gamma-glutamyl phosphate reductase (428 aa).

Belongs to the gamma-glutamyl phosphate reductase family.

The protein resides in the cytoplasm. It carries out the reaction L-glutamate 5-semialdehyde + phosphate + NADP(+) = L-glutamyl 5-phosphate + NADPH + H(+). Its pathway is amino-acid biosynthesis; L-proline biosynthesis; L-glutamate 5-semialdehyde from L-glutamate: step 2/2. Catalyzes the NADPH-dependent reduction of L-glutamate 5-phosphate into L-glutamate 5-semialdehyde and phosphate. The product spontaneously undergoes cyclization to form 1-pyrroline-5-carboxylate. This is Gamma-glutamyl phosphate reductase from Clostridium tetani (strain Massachusetts / E88).